The chain runs to 2237 residues: Zinc finger protein 318 (2237 aa).

2 stretches are compositionally biased toward low complexity: residues methionine 1 to serine 12 and glycine 30 to proline 39. The tract at residues methionine 1–aspartate 221 is disordered. Residues methionine 1 to glutamine 1114 form an interaction with AR region. A Phosphoserine modification is found at serine 40. Residues proline 53–arginine 66 are compositionally biased toward basic residues. A phosphoserine mark is found at serine 69, serine 109, and serine 111. Residues isoleucine 140–histidine 156 are compositionally biased toward basic and acidic residues. 2 positions are modified to phosphoserine: serine 167 and serine 205. The residue at position 237 (tyrosine 237) is a Phosphotyrosine. Serine 239 and serine 246 each carry phosphoserine. Residues leucine 263–arginine 350 form a disordered region. 2 stretches are compositionally biased toward basic and acidic residues: residues cysteine 274–lysine 290 and arginine 297–histidine 317. Polar residues predominate over residues glycine 321 to asparagine 332. Residues glutamate 348–valine 376 adopt a coiled-coil conformation. A phosphoserine mark is found at serine 497, serine 502, serine 531, and serine 557. Disordered regions lie at residues glutamine 551–glutamate 612 and glutamine 645–serine 732. Acidic residues predominate over residues aspartate 560–isoleucine 576. Residues lysine 577, lysine 583, lysine 596, and lysine 607 each participate in a glycyl lysine isopeptide (Lys-Gly) (interchain with G-Cter in SUMO2) cross-link. Positions lysine 577–glutamate 586 are enriched in basic and acidic residues. Over residues glycine 592 to serine 602 the composition is skewed to polar residues. Composition is skewed to basic and acidic residues over residues serine 658–alanine 677 and arginine 692–histidine 706. Threonine 865 carries the post-translational modification Phosphothreonine. Positions glutamate 904–leucine 1003 form a coiled coil. Composition is skewed to basic and acidic residues over residues glutamine 945 to leucine 964, lysine 1013 to leucine 1037, and lysine 1047 to cysteine 1056. Disordered regions lie at residues glutamine 945 to methionine 966 and lysine 1013 to glutamine 1072. Serine 1032 carries the post-translational modification Phosphoserine. Positions lysine 1058–glutamine 1072 are enriched in polar residues. Residue serine 1059 is modified to Phosphoserine. 2 consecutive Matrin-type zinc fingers follow at residues alanine 1085 to tyrosine 1119 and phenylalanine 1158 to histidine 1180. 3 disordered regions span residues valine 1245 to proline 1289, serine 1302 to alanine 1342, and threonine 1366 to proline 1395. 3 stretches are compositionally biased toward basic and acidic residues: residues glutamine 1280–proline 1289, lysine 1304–glycine 1313, and proline 1321–lysine 1341. Serine 1445 is subject to Phosphoserine. Disordered stretches follow at residues lysine 1449–proline 1497, histidine 1614–serine 1651, threonine 1727–threonine 1770, and glutamate 1790–histidine 1867. The segment covering leucine 1469–alanine 1490 has biased composition (pro residues). A compositionally biased stretch (polar residues) spans leucine 1618–phenylalanine 1639. A compositionally biased stretch (low complexity) spans serine 1640 to serine 1651. The segment covering aspartate 1734–leucine 1749 has biased composition (basic and acidic residues). The segment covering threonine 1757 to threonine 1770 has biased composition (polar residues). Residues glycine 1796 to threonine 1814 are compositionally biased toward basic and acidic residues. The stretch at arginine 1798–serine 1827 forms a coiled coil. Positions glutamate 1815–glycine 1824 are enriched in acidic residues. Residues isoleucine 1828–threonine 1840 are compositionally biased toward polar residues. Residues serine 1878, serine 1908, serine 1988, serine 2044, serine 2054, serine 2140, serine 2143, serine 2194, and serine 2206 each carry the phosphoserine modification. A disordered region spans residues glutamate 2039–glutamate 2064. Residues alanine 2041–glutamate 2058 are compositionally biased toward polar residues. Positions glutamate 2178–glycine 2237 are disordered. The segment covering serine 2226–glycine 2237 has biased composition (polar residues).

As to quaternary structure, homodimer. Heterodimer of isoform 1 and isoform 2. Isoform 1 and isoform 2 interact with AR. In terms of tissue distribution, isoform 1 and isoform 2 are highly expressed in testis, moderately expressed in adrenal gland and uterus and faintly expressed in brain, kidney and liver. Isoform 1 is expressed more in adrenal gland, uterus and liver than isoform 2 is. Expression during testicular development of isoform 1 and isoform 2 is restricted to spermatocytes at the pachytene stage of meiotic prophase and to round and elongated spermatids.

It localises to the nucleus. Acts as a transcriptional corepressor for AR-mediated transactivation function. May act as a transcriptional regulator during spermatogenesis and in particular, during meiotic division. In terms of biological role, acts as a transcriptional coactivator for AR-mediated transactivation function. May act as a transcriptional regulator during spermatogenesis and in particular, during meiotic division. This Mus musculus (Mouse) protein is Zinc finger protein 318 (Znf318).